A 133-amino-acid chain; its full sequence is Large ribosomal subunit protein bL19 (133 aa).

It belongs to the bacterial ribosomal protein bL19 family.

Its function is as follows. This protein is located at the 30S-50S ribosomal subunit interface and may play a role in the structure and function of the aminoacyl-tRNA binding site. This chain is Large ribosomal subunit protein bL19, found in Stenotrophomonas maltophilia (strain K279a).